A 446-amino-acid chain; its full sequence is Phosphoglucosamine mutase (446 aa).

Residue Ser-102 is the Phosphoserine intermediate of the active site. Mg(2+) is bound by residues Ser-102, Asp-241, Asp-243, and Asp-245. Ser-102 carries the post-translational modification Phosphoserine.

This sequence belongs to the phosphohexose mutase family. Requires Mg(2+) as cofactor. Post-translationally, activated by phosphorylation.

It catalyses the reaction alpha-D-glucosamine 1-phosphate = D-glucosamine 6-phosphate. Functionally, catalyzes the conversion of glucosamine-6-phosphate to glucosamine-1-phosphate. This is Phosphoglucosamine mutase from Xylella fastidiosa (strain M12).